Here is a 241-residue protein sequence, read N- to C-terminus: ATP synthase subunit a (241 aa).

5 consecutive transmembrane segments (helical) span residues 21–41, 84–104, 116–136, 183–203, and 207–227; these read LASILMVIITSLIVLVIAIAC, VTLILFIFVGNMLGLPFAIVI, DATVTLTLATMVILLTHYYGI, ILIGLLSSLIIGHAAWGWIIG, and LIAWQAFSIFIGTIQAYIFIM.

Belongs to the ATPase A chain family. In terms of assembly, F-type ATPases have 2 components, CF(1) - the catalytic core - and CF(0) - the membrane proton channel. CF(1) has five subunits: alpha(3), beta(3), gamma(1), delta(1), epsilon(1). CF(0) has three main subunits: a(1), b(2) and c(9-12). The alpha and beta chains form an alternating ring which encloses part of the gamma chain. CF(1) is attached to CF(0) by a central stalk formed by the gamma and epsilon chains, while a peripheral stalk is formed by the delta and b chains.

It localises to the cell membrane. In terms of biological role, key component of the proton channel; it plays a direct role in the translocation of protons across the membrane. In Staphylococcus carnosus (strain TM300), this protein is ATP synthase subunit a.